The chain runs to 428 residues: Glutamate-1-semialdehyde 2,1-aminomutase (428 aa).

Lys-267 is modified (N6-(pyridoxal phosphate)lysine).

The protein belongs to the class-III pyridoxal-phosphate-dependent aminotransferase family. HemL subfamily. As to quaternary structure, homodimer. The cofactor is pyridoxal 5'-phosphate.

It localises to the cytoplasm. The enzyme catalyses (S)-4-amino-5-oxopentanoate = 5-aminolevulinate. It functions in the pathway porphyrin-containing compound metabolism; protoporphyrin-IX biosynthesis; 5-aminolevulinate from L-glutamyl-tRNA(Glu): step 2/2. This is Glutamate-1-semialdehyde 2,1-aminomutase from Pelobacter propionicus (strain DSM 2379 / NBRC 103807 / OttBd1).